The following is a 145-amino-acid chain: Protein SprT-like (145 aa).

Residues 4 to 140 (TNYVQEVSLA…VCGNCHGKLM (137 aa)) enclose the SprT-like domain. Residue His-64 coordinates Zn(2+). Glu-65 is an active-site residue. His-68 is a Zn(2+) binding site.

Belongs to the SprT family. Requires Zn(2+) as cofactor.

Its subcellular location is the cytoplasm. The polypeptide is Protein SprT-like (Streptococcus pyogenes serotype M1).